A 426-amino-acid polypeptide reads, in one-letter code: Histidinol dehydrogenase (426 aa).

3 residues coordinate NAD(+): Y123, Q185, and N208. 3 residues coordinate substrate: S231, Q253, and H256. 2 residues coordinate Zn(2+): Q253 and H256. Active-site proton acceptor residues include E321 and H322. The substrate site is built by H322, D355, E409, and H414. D355 lines the Zn(2+) pocket. H414 contacts Zn(2+).

This sequence belongs to the histidinol dehydrogenase family. It depends on Zn(2+) as a cofactor.

The enzyme catalyses L-histidinol + 2 NAD(+) + H2O = L-histidine + 2 NADH + 3 H(+). The protein operates within amino-acid biosynthesis; L-histidine biosynthesis; L-histidine from 5-phospho-alpha-D-ribose 1-diphosphate: step 9/9. Functionally, catalyzes the sequential NAD-dependent oxidations of L-histidinol to L-histidinaldehyde and then to L-histidine. The protein is Histidinol dehydrogenase of Bacillus licheniformis (strain ATCC 14580 / DSM 13 / JCM 2505 / CCUG 7422 / NBRC 12200 / NCIMB 9375 / NCTC 10341 / NRRL NRS-1264 / Gibson 46).